A 143-amino-acid chain; its full sequence is Transcriptional regulator MraZ (143 aa).

2 consecutive SpoVT-AbrB domains span residues Thr5–Glu47 and Ala76–Thr119.

This sequence belongs to the MraZ family. Forms oligomers.

It localises to the cytoplasm. The protein resides in the nucleoid. This Clavibacter michiganensis subsp. michiganensis (strain NCPPB 382) protein is Transcriptional regulator MraZ.